The primary structure comprises 87 residues: Phosphoribosyl-ATP pyrophosphatase (87 aa).

It belongs to the PRA-PH family.

It localises to the cytoplasm. The catalysed reaction is 1-(5-phospho-beta-D-ribosyl)-ATP + H2O = 1-(5-phospho-beta-D-ribosyl)-5'-AMP + diphosphate + H(+). The protein operates within amino-acid biosynthesis; L-histidine biosynthesis; L-histidine from 5-phospho-alpha-D-ribose 1-diphosphate: step 2/9. The polypeptide is Phosphoribosyl-ATP pyrophosphatase (Clavibacter sepedonicus (Clavibacter michiganensis subsp. sepedonicus)).